The following is a 325-amino-acid chain: MLLAPGDVIKRSSEELKQRQIQINLIDWIESESGKEDKAEPKEESKAEESKDGQGTQSESSQKKEGSKEAKDADVDRRIHTAVGSGSSAKGPGVRANENVDRGDGKVGGGGGNADAGVGTIGANGGRWVVLTEEIARAIESKYGTKIDVYRDKVPAQIIEVERSLQKELGISREGVAEQTERLRDLRRKEKSGAHAKAAERGRRKQGKKPHGDVQKEGTEEEKTSEEQASVGIAIEGVMSQKKLLSMIGGVERKMAPIGARESAVMLVSNSIKDVVRATAYFTAPTGDPHWKEVAREASKKKNILAYTSTGGDVKTEFLHLIDHL.

Disordered stretches follow at residues 23–123 (INLI…TIGA) and 176–229 (VAEQ…EEQA). Basic and acidic residues-rich tracts occupy residues 32–52 (ESGK…ESKD) and 61–79 (SQKK…DRRI). The segment covering 106 to 123 (KVGGGGGNADAGVGTIGA) has biased composition (gly residues). Basic and acidic residues-rich tracts occupy residues 176–201 (VAEQ…AAER) and 210–226 (PHGD…KTSE).

Belongs to the orbivirus VP6 family.

It is found in the virion. Functionally, surrounds and interacts with the genomic dsRNA. Possesses ss- and dsRNA-binding capacity. Its hydrophilic nature and capability to bind ss- and dsRNA suggest that it interacts with BTV genomic RNA. The chain is Protein VP6-B (Segment-9) from Bluetongue virus 10 (isolate USA) (BTV 10).